Consider the following 845-residue polypeptide: Protein P (845 aa).

Residues 1–179 (MPLSYQHFLK…FCGSPYSWEQ (179 aa)) are terminal protein domain (TP). Residues 180 to 348 (ELHHGRLVTK…YCLSHLVNLL (169 aa)) form a spacer region. Disordered stretches follow at residues 188 to 211 (TKTSQRHGDKSVCSQPSGILSRSS) and 288 to 317 (YSHLSTSKRQSSSGHKVEFPSFPPSSARSQ). 2 stretches are compositionally biased toward polar residues: residues 199–211 (VCSQPSGILSRSS) and 290–301 (HLSTSKRQSSSG). A polymerase/reverse transcriptase domain (RT) region spans residues 349–692 (EDWGPCTDHG…YMNLYPVARQ (344 aa)). Positions 359-602 (EHHIRIPRTP…YSLNFMGYII (244 aa)) constitute a Reverse transcriptase domain. Mg(2+)-binding residues include Asp431, Asp553, and Asp554.

This sequence belongs to the hepadnaviridae P protein family.

The catalysed reaction is DNA(n) + a 2'-deoxyribonucleoside 5'-triphosphate = DNA(n+1) + diphosphate. It catalyses the reaction Endonucleolytic cleavage to 5'-phosphomonoester.. With respect to regulation, activated by host HSP70 and HSP40 in vitro to be able to bind the epsilon loop of the pgRNA. Because deletion of the RNase H region renders the protein partly chaperone-independent, the chaperones may be needed indirectly to relieve occlusion of the RNA-binding site by this domain. Inhibited by several reverse-transcriptase inhibitors: Lamivudine, Adefovir and Entecavir. Its function is as follows. Multifunctional enzyme that converts the viral RNA genome into dsDNA in viral cytoplasmic capsids. This enzyme displays a DNA polymerase activity that can copy either DNA or RNA templates, and a ribonuclease H (RNase H) activity that cleaves the RNA strand of RNA-DNA heteroduplexes in a partially processive 3'- to 5'-endonucleasic mode. Neo-synthesized pregenomic RNA (pgRNA) are encapsidated together with the P protein, and reverse-transcribed inside the nucleocapsid. Initiation of reverse-transcription occurs first by binding the epsilon loop on the pgRNA genome, and is initiated by protein priming, thereby the 5'-end of (-)DNA is covalently linked to P protein. Partial (+)DNA is synthesized from the (-)DNA template and generates the relaxed circular DNA (RC-DNA) genome. After budding and infection, the RC-DNA migrates in the nucleus, and is converted into a plasmid-like covalently closed circular DNA (cccDNA). The activity of P protein does not seem to be necessary for cccDNA generation, and is presumably released from (+)DNA by host nuclear DNA repair machinery. The sequence is that of Protein P from Homo sapiens (Human).